The following is a 218-amino-acid chain: Holliday junction branch migration complex subunit RuvA (218 aa).

The domain I stretch occupies residues 1-64 (MIGKITGRLE…EDVMQLFGFT (64 aa)). Residues 65–143 (TLTEKEWHRL…SVMGMSDTQA (79 aa)) form a domain II region. A flexible linker region spans residues 144–164 (TVAAQSSDAVIETRAAPSPVV). Residues 165 to 218 (QNPSAQAEALSALSNLGYAPGDAAAAVAQAAGELPDAETPDLIRAALKRLAPKG) form a domain III region.

Belongs to the RuvA family. In terms of assembly, homotetramer. Forms an RuvA(8)-RuvB(12)-Holliday junction (HJ) complex. HJ DNA is sandwiched between 2 RuvA tetramers; dsDNA enters through RuvA and exits via RuvB. An RuvB hexamer assembles on each DNA strand where it exits the tetramer. Each RuvB hexamer is contacted by two RuvA subunits (via domain III) on 2 adjacent RuvB subunits; this complex drives branch migration. In the full resolvosome a probable DNA-RuvA(4)-RuvB(12)-RuvC(2) complex forms which resolves the HJ.

Its subcellular location is the cytoplasm. The RuvA-RuvB-RuvC complex processes Holliday junction (HJ) DNA during genetic recombination and DNA repair, while the RuvA-RuvB complex plays an important role in the rescue of blocked DNA replication forks via replication fork reversal (RFR). RuvA specifically binds to HJ cruciform DNA, conferring on it an open structure. The RuvB hexamer acts as an ATP-dependent pump, pulling dsDNA into and through the RuvAB complex. HJ branch migration allows RuvC to scan DNA until it finds its consensus sequence, where it cleaves and resolves the cruciform DNA. This Roseobacter denitrificans (strain ATCC 33942 / OCh 114) (Erythrobacter sp. (strain OCh 114)) protein is Holliday junction branch migration complex subunit RuvA.